We begin with the raw amino-acid sequence, 273 residues long: Cell division protein ZipA (273 aa).

Residue Met1 is a topological domain, periplasmic. A helical membrane pass occupies residues 2–22 (EFGLREWLIVIGIIVIAGILF). Topologically, residues 23–273 (DGWRRMRGGK…FERRQLTQKR (251 aa)) are cytoplasmic. The segment at 65–125 (EMEPQLDEDD…QEPKKSAKLS (61 aa)) is disordered. Residues 111 to 120 (VDDKPQEPKK) are compositionally biased toward basic and acidic residues.

The protein belongs to the ZipA family. Interacts with FtsZ via their C-terminal domains.

The protein localises to the cell inner membrane. Its function is as follows. Essential cell division protein that stabilizes the FtsZ protofilaments by cross-linking them and that serves as a cytoplasmic membrane anchor for the Z ring. Also required for the recruitment to the septal ring of downstream cell division proteins. This Ectopseudomonas mendocina (strain ymp) (Pseudomonas mendocina) protein is Cell division protein ZipA.